We begin with the raw amino-acid sequence, 234 residues long: Purine nucleoside phosphorylase DeoD-type (234 aa).

His4 contributes to the a purine D-ribonucleoside binding site. Residues Gly20, Arg24, Arg43, and 87 to 90 (RIGS) contribute to the phosphate site. A purine D-ribonucleoside-binding positions include Glu162, 179–181 (EME), and 203–204 (SD). The Proton donor role is filled by Asp204.

The protein belongs to the PNP/UDP phosphorylase family. Homohexamer; trimer of homodimers.

It carries out the reaction a purine D-ribonucleoside + phosphate = a purine nucleobase + alpha-D-ribose 1-phosphate. The enzyme catalyses a purine 2'-deoxy-D-ribonucleoside + phosphate = a purine nucleobase + 2-deoxy-alpha-D-ribose 1-phosphate. In terms of biological role, catalyzes the reversible phosphorolytic breakdown of the N-glycosidic bond in the beta-(deoxy)ribonucleoside molecules, with the formation of the corresponding free purine bases and pentose-1-phosphate. This Roseobacter denitrificans (strain ATCC 33942 / OCh 114) (Erythrobacter sp. (strain OCh 114)) protein is Purine nucleoside phosphorylase DeoD-type.